The sequence spans 1526 residues: Myosin type-2 heavy chain 1 (1526 aa).

The region spanning 22-73 is the Myosin N-terminal SH3-like domain; it reads DDKRWVWISDPETAFTKAWIKEDLPDKKYVVRYNNSRDEKIVGEDEIDPVNP. One can recognise a Myosin motor domain in the interval 77-755; sequence DRVNDMAELT…VLAELEERRV (679 aa). 170–177 is an ATP binding site; it reads GESGAGKT. Actin-binding regions lie at residues 634–656 and 734–748; these read LNQL…VPNE and RIGV…GVLA. The 30-residue stretch at 758-787 folds into the IQ domain; it reads LQRLMTMLQTRIRGFLQRKIFQKRLKDIQA. The stretch at 875 to 1244 forms a coiled coil; the sequence is ALDKEEILRR…SLTKQVNELS (370 aa). Ser-1044 bears the Phosphoserine mark.

It belongs to the TRAFAC class myosin-kinesin ATPase superfamily. Myosin family. As to quaternary structure, binds to cdc4 and rlc1.

Required for cell division. It is a component of the cdc12 'spot', a structure thought to mark the site of septation. May work in conjunction with myo3. The polypeptide is Myosin type-2 heavy chain 1 (myo2) (Schizosaccharomyces pombe (strain 972 / ATCC 24843) (Fission yeast)).